Reading from the N-terminus, the 182-residue chain is Putative manganese efflux pump MntP 1 (182 aa).

6 helical membrane passes run L4–A24, I42–I62, S63–Y83, L103–I123, V127–L147, and I162–F182.

Belongs to the MntP (TC 9.B.29) family.

The protein resides in the cell inner membrane. In terms of biological role, probably functions as a manganese efflux pump. This chain is Putative manganese efflux pump MntP 1, found in Wolinella succinogenes (strain ATCC 29543 / DSM 1740 / CCUG 13145 / JCM 31913 / LMG 7466 / NCTC 11488 / FDC 602W) (Vibrio succinogenes).